The following is a 240-amino-acid chain: Uridylate kinase (240 aa).

Lys-13 to Gly-16 is a binding site for ATP. An involved in allosteric activation by GTP region spans residues Gly-21–Gly-26. Gly-55 contributes to the UMP binding site. ATP-binding residues include Gly-56 and Arg-60. UMP contacts are provided by residues Asp-75 and Thr-136–Thr-143. Positions 163, 164, 169, and 172 each coordinate ATP.

The protein belongs to the UMP kinase family. As to quaternary structure, homohexamer.

Its subcellular location is the cytoplasm. It catalyses the reaction UMP + ATP = UDP + ADP. Its pathway is pyrimidine metabolism; CTP biosynthesis via de novo pathway; UDP from UMP (UMPK route): step 1/1. Allosterically activated by GTP. Inhibited by UTP. Functionally, catalyzes the reversible phosphorylation of UMP to UDP. This Rhizobium etli (strain ATCC 51251 / DSM 11541 / JCM 21823 / NBRC 15573 / CFN 42) protein is Uridylate kinase.